Here is a 643-residue protein sequence, read N- to C-terminus: Threonine--tRNA ligase (643 aa).

The TGS domain maps to 1–61 (MPIITLPDGS…EQDATLEIIT (61 aa)). Residues 243-534 (DHRKIGKALD…ITEEYAGFFP (292 aa)) form a catalytic region. The Zn(2+) site is built by Cys-334, His-385, and His-511.

This sequence belongs to the class-II aminoacyl-tRNA synthetase family. In terms of assembly, homodimer. It depends on Zn(2+) as a cofactor.

It localises to the cytoplasm. It catalyses the reaction tRNA(Thr) + L-threonine + ATP = L-threonyl-tRNA(Thr) + AMP + diphosphate + H(+). In terms of biological role, catalyzes the attachment of threonine to tRNA(Thr) in a two-step reaction: L-threonine is first activated by ATP to form Thr-AMP and then transferred to the acceptor end of tRNA(Thr). Also edits incorrectly charged L-seryl-tRNA(Thr). This is Threonine--tRNA ligase from Haemophilus influenzae (strain 86-028NP).